Here is a 617-residue protein sequence, read N- to C-terminus: Chaperone protein HscA homolog (617 aa).

Belongs to the heat shock protein 70 family.

Its function is as follows. Probable chaperone. Has a low intrinsic ATPase activity which is markedly stimulated by HscB. In Vibrio vulnificus (strain CMCP6), this protein is Chaperone protein HscA homolog.